The primary structure comprises 196 residues: Cytochrome c biogenesis ATP-binding export protein CcmA (196 aa).

An ABC transporter domain is found at 2–195 (LSFHQLKFNI…HIKSAQILQL (194 aa)). Residue 34-41 (GANGCGKT) participates in ATP binding.

The protein belongs to the ABC transporter superfamily. CcmA exporter (TC 3.A.1.107) family. As to quaternary structure, the complex is composed of two ATP-binding proteins (CcmA) and two transmembrane proteins (CcmB).

It is found in the cell inner membrane. It catalyses the reaction heme b(in) + ATP + H2O = heme b(out) + ADP + phosphate + H(+). Part of the ABC transporter complex CcmAB involved in the biogenesis of c-type cytochromes; once thought to export heme, this seems not to be the case, but its exact role is uncertain. Responsible for energy coupling to the transport system. The sequence is that of Cytochrome c biogenesis ATP-binding export protein CcmA from Rickettsia bellii (strain RML369-C).